Here is a 120-residue protein sequence, read N- to C-terminus: Glycine cleavage system H protein (120 aa).

Residues Val-17–Lys-99 enclose the Lipoyl-binding domain. At Lys-58 the chain carries N6-lipoyllysine.

This sequence belongs to the GcvH family. The glycine cleavage system is composed of four proteins: P, T, L and H. It depends on (R)-lipoate as a cofactor.

Its function is as follows. The glycine cleavage system catalyzes the degradation of glycine. The H protein shuttles the methylamine group of glycine from the P protein to the T protein. The chain is Glycine cleavage system H protein from Methylorubrum populi (strain ATCC BAA-705 / NCIMB 13946 / BJ001) (Methylobacterium populi).